We begin with the raw amino-acid sequence, 462 residues long: Glycine--tRNA ligase (462 aa).

Residues arginine 101 and glutamate 164 each coordinate substrate. Residues 196-198 (RNE), 206-211 (FRTREF), 283-284 (EL), and 327-330 (GVDR) each bind ATP. 211-215 (FEQME) provides a ligand contact to substrate. Residue 323–327 (EPSAG) participates in substrate binding.

Belongs to the class-II aminoacyl-tRNA synthetase family. In terms of assembly, homodimer.

It is found in the cytoplasm. It carries out the reaction tRNA(Gly) + glycine + ATP = glycyl-tRNA(Gly) + AMP + diphosphate. In terms of biological role, catalyzes the attachment of glycine to tRNA(Gly). This is Glycine--tRNA ligase from Thermobifida fusca (strain YX).